Reading from the N-terminus, the 637-residue chain is ATP-dependent RNA helicase DBP6 (637 aa).

The segment at Met-1–Asn-93 is disordered. Positions Asp-33–Ala-84 are enriched in acidic residues. The Q motif signature appears at Thr-198–Leu-206. Residues Lys-222 to Phe-402 enclose the Helicase ATP-binding domain. ATP is bound at residue Ala-235–Thr-242. The short motif at Asp-342–Asp-345 is the DEAD box element. Positions Phe-434–Leu-608 constitute a Helicase C-terminal domain.

The protein belongs to the DEAD box helicase family. DDX51/DBP6 subfamily. As to quaternary structure, associated with pre-ribosomal particles.

It localises to the nucleus. It is found in the nucleolus. The enzyme catalyses ATP + H2O = ADP + phosphate + H(+). ATP-binding RNA helicase involved in the biogenesis of 60S ribosomal subunits and is required for the normal formation of 25S and 5.8S rRNAs. The polypeptide is ATP-dependent RNA helicase DBP6 (DBP6) (Vanderwaltozyma polyspora (strain ATCC 22028 / DSM 70294 / BCRC 21397 / CBS 2163 / NBRC 10782 / NRRL Y-8283 / UCD 57-17) (Kluyveromyces polysporus)).